The primary structure comprises 444 residues: Structure-specific endonuclease subunit SLX1 (444 aa).

Residues 23–105 enclose the GIY-YIG domain; the sequence is AFSCCYLLRS…QNTKVSRHAD (83 aa). The SLX1-type zinc-finger motif lies at 240–295; sequence CGVCKQRLILQHDIIAVCSHSSCHCAAHLSCLSSHFLKDKDSDSELVPREGTCPTC. Residues 324 to 354 are disordered; the sequence is RRQRAGTPKGQGLKSVRGRGHSEDENESDAL.

Belongs to the SLX1 family. Forms a heterodimer with SLX4. The cofactor is a divalent metal cation.

It localises to the nucleus. Functionally, catalytic subunit of the SLX1-SLX4 structure-specific endonuclease that resolves DNA secondary structures generated during DNA repair and recombination. Has endonuclease activity towards branched DNA substrates, introducing single-strand cuts in duplex DNA close to junctions with ss-DNA. This chain is Structure-specific endonuclease subunit SLX1, found in Paracoccidioides lutzii (strain ATCC MYA-826 / Pb01) (Paracoccidioides brasiliensis).